The following is a 402-amino-acid chain: D-mannonate dehydratase (402 aa).

Substrate-binding residues include Asn-37 and His-122. The Proton donor/acceptor role is filled by Tyr-159. Asp-210 is a binding site for Mg(2+). The active-site Proton donor/acceptor is His-212. Mg(2+)-binding residues include Glu-236 and Glu-262. Positions 262, 283, 312, 316, and 339 each coordinate substrate.

Belongs to the mandelate racemase/muconate lactonizing enzyme family. GalD subfamily. Homotetramer. The cofactor is Mg(2+).

It catalyses the reaction D-mannonate = 2-dehydro-3-deoxy-D-gluconate + H2O. The protein operates within carbohydrate metabolism; pentose and glucuronate interconversion. Its function is as follows. Catalyzes the dehydration of D-mannonate. Has no detectable activity with a panel of 70 other acid sugars (in vitro). This Novosphingobium aromaticivorans (strain ATCC 700278 / DSM 12444 / CCUG 56034 / CIP 105152 / NBRC 16084 / F199) protein is D-mannonate dehydratase (manD).